We begin with the raw amino-acid sequence, 193 residues long: Adenine phosphoribosyltransferase (193 aa).

It belongs to the purine/pyrimidine phosphoribosyltransferase family. In terms of assembly, homodimer.

Its subcellular location is the cytoplasm. The catalysed reaction is AMP + diphosphate = 5-phospho-alpha-D-ribose 1-diphosphate + adenine. It functions in the pathway purine metabolism; AMP biosynthesis via salvage pathway; AMP from adenine: step 1/1. Its function is as follows. Catalyzes a salvage reaction resulting in the formation of AMP, that is energically less costly than de novo synthesis. In Bifidobacterium longum (strain NCC 2705), this protein is Adenine phosphoribosyltransferase.